We begin with the raw amino-acid sequence, 308 residues long: Aspartate carbamoyltransferase catalytic subunit (308 aa).

Positions 59 and 60 each coordinate carbamoyl phosphate. Lys87 serves as a coordination point for L-aspartate. Residues Arg109, His139, and Gln142 each contribute to the carbamoyl phosphate site. L-aspartate contacts are provided by Arg172 and Arg224. Residues Ala265 and Pro266 each contribute to the carbamoyl phosphate site.

It belongs to the aspartate/ornithine carbamoyltransferase superfamily. ATCase family. In terms of assembly, heterododecamer (2C3:3R2) of six catalytic PyrB chains organized as two trimers (C3), and six regulatory PyrI chains organized as three dimers (R2).

The enzyme catalyses carbamoyl phosphate + L-aspartate = N-carbamoyl-L-aspartate + phosphate + H(+). Its pathway is pyrimidine metabolism; UMP biosynthesis via de novo pathway; (S)-dihydroorotate from bicarbonate: step 2/3. Its function is as follows. Catalyzes the condensation of carbamoyl phosphate and aspartate to form carbamoyl aspartate and inorganic phosphate, the committed step in the de novo pyrimidine nucleotide biosynthesis pathway. This Streptococcus mutans serotype c (strain ATCC 700610 / UA159) protein is Aspartate carbamoyltransferase catalytic subunit.